Consider the following 209-residue polypeptide: Ras-like GTP-binding protein RYL2 (209 aa).

GTP is bound at residue 12–19; the sequence is GAQGVGKT. Residues 34-42 carry the Effector region motif; it reads QASTIGASF. Residues 60 to 64 and 118 to 121 each bind GTP; these read DTAGQ and TKVD. S-geranylgeranyl cysteine attachment occurs at residues Cys208 and Cys209.

The protein belongs to the small GTPase superfamily. Rab family.

The protein resides in the cell membrane. Functionally, protein transport. Probably involved in vesicular traffic. This is Ras-like GTP-binding protein RYL2 (RYL2) from Yarrowia lipolytica (strain CLIB 122 / E 150) (Yeast).